The primary structure comprises 95 residues: Pyrimidine/purine nucleoside phosphorylase (95 aa).

The protein belongs to the nucleoside phosphorylase PpnP family.

It carries out the reaction a purine D-ribonucleoside + phosphate = a purine nucleobase + alpha-D-ribose 1-phosphate. It catalyses the reaction adenosine + phosphate = alpha-D-ribose 1-phosphate + adenine. The enzyme catalyses cytidine + phosphate = cytosine + alpha-D-ribose 1-phosphate. The catalysed reaction is guanosine + phosphate = alpha-D-ribose 1-phosphate + guanine. It carries out the reaction inosine + phosphate = alpha-D-ribose 1-phosphate + hypoxanthine. It catalyses the reaction thymidine + phosphate = 2-deoxy-alpha-D-ribose 1-phosphate + thymine. The enzyme catalyses uridine + phosphate = alpha-D-ribose 1-phosphate + uracil. The catalysed reaction is xanthosine + phosphate = alpha-D-ribose 1-phosphate + xanthine. In terms of biological role, catalyzes the phosphorolysis of diverse nucleosides, yielding D-ribose 1-phosphate and the respective free bases. Can use uridine, adenosine, guanosine, cytidine, thymidine, inosine and xanthosine as substrates. Also catalyzes the reverse reactions. The polypeptide is Pyrimidine/purine nucleoside phosphorylase (Yersinia pestis bv. Antiqua (strain Antiqua)).